Reading from the N-terminus, the 150-residue chain is Suppressor of HU sensitivity involved in recombination protein 1 (150 aa).

As to quaternary structure, component of the SHU complex composed of at least CSM2, PSY3, SHU1 and SHU2.

It localises to the nucleus. In terms of biological role, plays a role in a RAD51/RAD54-dependent homologous recombination repair (HRR) pathway to repair MMS-induced lesions during S-phase. This Saccharomyces cerevisiae (strain ATCC 204508 / S288c) (Baker's yeast) protein is Suppressor of HU sensitivity involved in recombination protein 1 (SHU1).